The following is a 431-amino-acid chain: Tyrosine--tRNA ligase (431 aa).

Tyr-34 is an L-tyrosine binding site. Residues 39 to 48 (PTADSLHIGH) carry the 'HIGH' region motif. Positions 171 and 175 each coordinate L-tyrosine. The 'KMSKS' region motif lies at 231 to 235 (KFGKT). Lys-234 serves as a coordination point for ATP. The S4 RNA-binding domain occupies 353-422 (INAVEALVKT…GKYTILRRGK (70 aa)).

It belongs to the class-I aminoacyl-tRNA synthetase family. TyrS type 1 subfamily. Homodimer.

It localises to the cytoplasm. It carries out the reaction tRNA(Tyr) + L-tyrosine + ATP = L-tyrosyl-tRNA(Tyr) + AMP + diphosphate + H(+). Catalyzes the attachment of tyrosine to tRNA(Tyr) in a two-step reaction: tyrosine is first activated by ATP to form Tyr-AMP and then transferred to the acceptor end of tRNA(Tyr). This Neisseria gonorrhoeae (strain ATCC 700825 / FA 1090) protein is Tyrosine--tRNA ligase.